The following is a 126-amino-acid chain: Protein ApaG (126 aa).

The 125-residue stretch at 2-126 (RRKPYELKVE…FSLAIPRRLH (125 aa)) folds into the ApaG domain.

The sequence is that of Protein ApaG from Methylococcus capsulatus (strain ATCC 33009 / NCIMB 11132 / Bath).